We begin with the raw amino-acid sequence, 370 residues long: Cobalt-precorrin-5B C(1)-methyltransferase (370 aa).

It belongs to the CbiD family.

It carries out the reaction Co-precorrin-5B + S-adenosyl-L-methionine = Co-precorrin-6A + S-adenosyl-L-homocysteine. Its pathway is cofactor biosynthesis; adenosylcobalamin biosynthesis; cob(II)yrinate a,c-diamide from sirohydrochlorin (anaerobic route): step 6/10. Its function is as follows. Catalyzes the methylation of C-1 in cobalt-precorrin-5B to form cobalt-precorrin-6A. The chain is Cobalt-precorrin-5B C(1)-methyltransferase from Pseudomonas syringae pv. tomato (strain ATCC BAA-871 / DC3000).